The chain runs to 255 residues: uncharacterized protein (255 aa).

The first 23 residues, 1-23 (MKRLNKLVLYISFLILVISFTAG), serve as a signal peptide directing secretion. Cys24 is lipidated: N-palmitoyl cysteine. Cys24 carries the S-diacylglycerol cysteine lipid modification.

This sequence belongs to the staphylococcal tandem lipoprotein family.

The protein localises to the cell membrane. This is an uncharacterized protein from Staphylococcus aureus (strain N315).